The following is a 183-amino-acid chain: Tetrahydromethanopterin S-methyltransferase subunit A 2 (183 aa).

Over 1 to 101 (MFLMVEKKPV…TMKALHSNGV (101 aa)) the chain is Cytoplasmic. Position 87 (His-87) interacts with 5-hydroxybenzimidazolylcob(I)amide. The helical transmembrane segment at 102–118 (DLETGRIIGATGAIPYI) threads the bilayer. The Extracellular portion of the chain corresponds to 119–183 (ENMPEEAIER…IGKGDSEENT (65 aa)).

This sequence belongs to the MtrA family. In terms of assembly, the complex is composed of 8 subunits; MtrA, MtrB, MtrC, MtrD, MtrE, MtrF, MtrG and MtrH. It depends on 5-hydroxybenzimidazolylcob(I)amide as a cofactor.

It localises to the cell membrane. The catalysed reaction is 5-methyl-5,6,7,8-tetrahydromethanopterin + coenzyme M + 2 Na(+)(in) = 5,6,7,8-tetrahydromethanopterin + methyl-coenzyme M + 2 Na(+)(out). It functions in the pathway one-carbon metabolism; methanogenesis from CO(2); methyl-coenzyme M from 5,10-methylene-5,6,7,8-tetrahydromethanopterin: step 2/2. Its function is as follows. Part of a complex that catalyzes the formation of methyl-coenzyme M and tetrahydromethanopterin from coenzyme M and methyl-tetrahydromethanopterin. This is an energy-conserving, sodium-ion translocating step. The chain is Tetrahydromethanopterin S-methyltransferase subunit A 2 from Methanothermobacter thermautotrophicus (strain ATCC 29096 / DSM 1053 / JCM 10044 / NBRC 100330 / Delta H) (Methanobacterium thermoautotrophicum).